The sequence spans 145 residues: Putative antiporter subunit mnhG2 (145 aa).

3 helical membrane-spanning segments follow: residues 11–31 (IAAV…IGIV), 51–71 (VLLT…FFSV), and 72–92 (RLLL…HLVA).

The protein belongs to the CPA3 antiporters (TC 2.A.63) subunit G family. In terms of assembly, may form a heterooligomeric complex that consists of seven subunits: mnhA2, mnhB2, mnhC2, mnhD2, mnhE2, mnhF2 and mnhG2.

The protein localises to the cell membrane. This Staphylococcus aureus (strain MRSA252) protein is Putative antiporter subunit mnhG2 (mnhG2).